The chain runs to 43 residues: Potassium channel toxin gamma-KTx 4.12 (43 aa).

Disulfide bonds link Cys-5/Cys-23, Cys-11/Cys-34, Cys-20/Cys-39, and Cys-24/Cys-41.

As to expression, expressed by the venom gland.

The protein localises to the secreted. Functionally, reversibly blocks Kv11/ERG potassium channels. Is less toxic than ergtoxin (AC Q86QT3). This is Potassium channel toxin gamma-KTx 4.12 from Centruroides sculpturatus (Arizona bark scorpion).